The primary structure comprises 197 residues: dITP/XTP pyrophosphatase (197 aa).

8 to 13 provides a ligand contact to substrate; the sequence is TGNVGK. Mg(2+)-binding residues include Glu40 and Asp69. Catalysis depends on Asp69, which acts as the Proton acceptor. Substrate contacts are provided by residues Ser70, 154–157, Lys177, and 182–183; these read FGYD and HR.

Belongs to the HAM1 NTPase family. Homodimer. The cofactor is Mg(2+). Requires Mn(2+) as cofactor. It depends on Ni(2+) as a cofactor.

It carries out the reaction XTP + H2O = XMP + diphosphate + H(+). It catalyses the reaction dITP + H2O = dIMP + diphosphate + H(+). The catalysed reaction is ITP + H2O = IMP + diphosphate + H(+). Pyrophosphatase that catalyzes the hydrolysis of nucleoside triphosphates to their monophosphate derivatives, with a high preference for the non-canonical purine nucleotides XTP (xanthosine triphosphate), dITP (deoxyinosine triphosphate) and ITP. Can also efficiently hydrolyze 2'-deoxy-N-6-hydroxylaminopurine triphosphate (dHAPTP). Seems to function as a house-cleaning enzyme that removes non-canonical purine nucleotides from the nucleotide pool, thus preventing their incorporation into DNA/RNA and avoiding chromosomal lesions. To a much lesser extent, is also able to hydrolyze GTP, dGTP and dUTP, but shows very low activity toward the canonical nucleotides dATP, dCTP and dTTP and toward 8-oxo-dGTP, purine deoxyribose triphosphate, 2-aminopurine deoxyribose triphosphate and 2,6-diaminopurine deoxyribose triphosphate. In terms of biological role, genetic interactions among priB, dam, lexA, nagC, polA, rdgB, rdgB, rep and uup link the PriA-PriB replication restart pathway to DNA double-strand break repair. This chain is dITP/XTP pyrophosphatase, found in Escherichia coli (strain K12).